A 110-amino-acid polypeptide reads, in one-letter code: Flagellar hook-basal body complex protein FliE (110 aa).

This sequence belongs to the FliE family.

Its subcellular location is the bacterial flagellum basal body. This Pseudomonas putida (strain GB-1) protein is Flagellar hook-basal body complex protein FliE.